A 255-amino-acid polypeptide reads, in one-letter code: Hydroxyacylglutathione hydrolase (255 aa).

Residues His53, His55, Asp57, His58, His110, Asp127, and His165 each contribute to the Zn(2+) site.

It belongs to the metallo-beta-lactamase superfamily. Glyoxalase II family. As to quaternary structure, monomer. The cofactor is Zn(2+).

The catalysed reaction is an S-(2-hydroxyacyl)glutathione + H2O = a 2-hydroxy carboxylate + glutathione + H(+). The protein operates within secondary metabolite metabolism; methylglyoxal degradation; (R)-lactate from methylglyoxal: step 2/2. Functionally, thiolesterase that catalyzes the hydrolysis of S-D-lactoyl-glutathione to form glutathione and D-lactic acid. The chain is Hydroxyacylglutathione hydrolase from Xanthomonas oryzae pv. oryzae (strain MAFF 311018).